We begin with the raw amino-acid sequence, 49 residues long: uncharacterized protein (49 aa).

The disordered stretch occupies residues Met1 to Ile49. Over residues Asn9 to Glu18 the composition is skewed to basic and acidic residues.

This is an uncharacterized protein from Dictyostelium discoideum (Social amoeba).